A 66-amino-acid chain; its full sequence is Nigrocin-2GRa (66 aa).

Residues 1–22 (MFTLKKSQLLLFFPGTINLSLC) form the signal peptide. A propeptide spanning residues 23-45 (QDETNAEEERRDEEVAKMEEIKR) is cleaved from the precursor. Cys60 and Cys66 are disulfide-bonded.

Expressed by the skin glands.

It is found in the secreted. Functionally, antimicrobial peptide active at least against the Gram-positive bacterium S.aureus but with otherwise unclear activity spectrum. Lacks hemolytic activity against rabbit or human erythrocytes. The chain is Nigrocin-2GRa from Odorrana grahami (Yunnanfu frog).